Reading from the N-terminus, the 183-residue chain is MVTPFPEVSEWLCIGQIVGAHGLRGEVKVKPFSDFPERFTVPGCRWLRSPRQPQPYAVTLLRGRFLPRAEQFVVTFAEISDRTAAEALKGAEILVPASDRPPLAANEYHLMDLIGLAVYHQGERVGEVVGLVNAGNDLLEVQLLDPAPKAPQSVYIPFVPAIVPVVDLAARRIEIDPPLGLLP.

Residues 105–181 (ANEYHLMDLI…RIEIDPPLGL (77 aa)) form the PRC barrel domain.

It belongs to the RimM family. In terms of assembly, binds ribosomal protein uS19.

It localises to the cytoplasm. An accessory protein needed during the final step in the assembly of 30S ribosomal subunit, possibly for assembly of the head region. Essential for efficient processing of 16S rRNA. May be needed both before and after RbfA during the maturation of 16S rRNA. It has affinity for free ribosomal 30S subunits but not for 70S ribosomes. The sequence is that of Ribosome maturation factor RimM from Thermosynechococcus vestitus (strain NIES-2133 / IAM M-273 / BP-1).